The chain runs to 226 residues: Endonuclease V (226 aa).

D43 and D111 together coordinate Mg(2+).

Belongs to the endonuclease V family. The cofactor is Mg(2+).

The protein resides in the cytoplasm. It catalyses the reaction Endonucleolytic cleavage at apurinic or apyrimidinic sites to products with a 5'-phosphate.. DNA repair enzyme involved in the repair of deaminated bases. Selectively cleaves double-stranded DNA at the second phosphodiester bond 3' to a deoxyinosine leaving behind the intact lesion on the nicked DNA. This is Endonuclease V from Nocardia farcinica (strain IFM 10152).